A 106-amino-acid chain; its full sequence is Phosphoribosyl-ATP pyrophosphatase (106 aa).

The protein belongs to the PRA-PH family.

It localises to the cytoplasm. It catalyses the reaction 1-(5-phospho-beta-D-ribosyl)-ATP + H2O = 1-(5-phospho-beta-D-ribosyl)-5'-AMP + diphosphate + H(+). Its pathway is amino-acid biosynthesis; L-histidine biosynthesis; L-histidine from 5-phospho-alpha-D-ribose 1-diphosphate: step 2/9. This Lactiplantibacillus plantarum (strain ATCC BAA-793 / NCIMB 8826 / WCFS1) (Lactobacillus plantarum) protein is Phosphoribosyl-ATP pyrophosphatase.